The chain runs to 115 residues: Large ribosomal subunit protein bL19 (115 aa).

It belongs to the bacterial ribosomal protein bL19 family.

Its function is as follows. This protein is located at the 30S-50S ribosomal subunit interface and may play a role in the structure and function of the aminoacyl-tRNA binding site. The protein is Large ribosomal subunit protein bL19 of Desulforudis audaxviator (strain MP104C).